The following is a 433-amino-acid chain: Monodehydroascorbate reductase (433 aa).

FAD is bound by residues 12-15, glutamate 39, arginine 46, lysine 51, isoleucine 94, and 145-146; these read GGVS and RE. NAD(+) is bound by residues 170–176, glutamate 194, arginine 200, and glycine 259; that span reads GGYIGLE. NADP(+) is bound at residue 172 to 176; sequence YIGLE. Arginine 200 and glycine 259 together coordinate NADP(+). Aspartate 296 is a binding site for FAD. 312 to 313 lines the NAD(+) pocket; sequence EH. 312–313 serves as a coordination point for NADP(+); that stretch reads EH. Valine 314 provides a ligand contact to FAD. Arginine 318 lines the L-ascorbate pocket. Residue tyrosine 347 participates in FAD binding. An NAD(+)-binding site is contributed by tyrosine 347. Tyrosine 347 lines the NADP(+) pocket. An L-ascorbate-binding site is contributed by arginine 349.

The protein belongs to the FAD-dependent oxidoreductase family. Requires FAD as cofactor. Expressed at relatively low levels in all tissues examined.

Its subcellular location is the cytoplasm. The catalysed reaction is 2 monodehydro-L-ascorbate radical + NADH + H(+) = 2 L-ascorbate + NAD(+). Catalyzes the conversion of monodehydroascorbate to ascorbate, oxidizing NADH in the process. The sequence is that of Monodehydroascorbate reductase from Pisum sativum (Garden pea).